Consider the following 97-residue polypeptide: Secreted Ly-6/uPAR domain-containing protein 2 (97 aa).

The N-terminal stretch at 1–22 (MQFHTGLLLAAVLSLQLAAAQA) is a signal peptide. The region spanning 23–95 (LWCHQCTGFG…IACCQTSLCN (73 aa)) is the UPAR/Ly6 domain. Disulfide bonds link C25/C47, C28/C34, C40/C68, C72/C88, and C89/C94.

Interacts with CHRNA3, CHRNA4, CHRNA5, CHRNA7, CHRNB2 and CHRNB4. Interacts with CHRM1 and CHRM3 probably in an allosteric manner.

The protein localises to the secreted. Functionally, binds and may modulate the functional properties of nicotinic and muscarinic acetylcholine receptors. May regulate keratinocytes proliferation, differentiation and apoptosis. In vitro moderately inhibits ACh-evoked currents of alpha-3:beta-2-containing nAChRs, strongly these of alpha-4:beta-2-containing nAChRs, modulates alpha-7-containing nAChRs, and inhibits nicotine-induced signaling probably implicating alpha-3:beta-4-containing nAChRs. Proposed to act on alpha-3:beta-2 and alpha-7 nAChRs in an orthosteric, and on mAChRs, such as CHRM1 and CHRM3, in an allosteric manner. The sequence is that of Secreted Ly-6/uPAR domain-containing protein 2 from Macaca mulatta (Rhesus macaque).